A 260-amino-acid chain; its full sequence is MNSIAPRLEIEQFICRSDNYGVLIHDPQSALTASIDAPDAAAIEAALKRRGWTLDFIFTTHHHLDHVEGNEALKAKYGVSIIGPKAEETKIPGIDRTVKDGDEFTFGLFRVKVIATPGHTAGEVSYYLPDAKAVFTGDTLFALGCGRLFEGTPLTMFQSLQKLVALPGDTAVYCGHEYTESNARFALTIDPANSALKERAAEIARLRAADRMTLPSSIALEMATNPFLRWHDAGIRSRLGLQDAPDEAVFAEIRKRKDMF.

Zn(2+) is bound by residues histidine 61, histidine 63, aspartate 65, histidine 66, histidine 119, aspartate 138, and histidine 176.

The protein belongs to the metallo-beta-lactamase superfamily. Glyoxalase II family. Monomer. Zn(2+) is required as a cofactor.

The enzyme catalyses an S-(2-hydroxyacyl)glutathione + H2O = a 2-hydroxy carboxylate + glutathione + H(+). The protein operates within secondary metabolite metabolism; methylglyoxal degradation; (R)-lactate from methylglyoxal: step 2/2. Thiolesterase that catalyzes the hydrolysis of S-D-lactoyl-glutathione to form glutathione and D-lactic acid. The polypeptide is Hydroxyacylglutathione hydrolase (Brucella anthropi (strain ATCC 49188 / DSM 6882 / CCUG 24695 / JCM 21032 / LMG 3331 / NBRC 15819 / NCTC 12168 / Alc 37) (Ochrobactrum anthropi)).